The primary structure comprises 290 residues: Xyloglucan endotransglucosylase/hydrolase protein 9 (290 aa).

The first 26 residues, 1 to 26, serve as a signal peptide directing secretion; sequence MVGMDLFKCVMMIMVLVVSCGEAVSG. Residues 27–215 enclose the GH16 domain; the sequence is AKFDELYRSS…WSHAPFVASY (189 aa). Asparagine 55 is a glycosylation site (N-linked (GlcNAc...) asparagine). The active-site Nucleophile is the glutamate 101. Residue glutamate 105 is the Proton donor of the active site. Glutamate 105 lines the xyloglucan pocket. N-linked (GlcNAc...) asparagine glycosylation is present at asparagine 109. Xyloglucan-binding positions include 118-120, 128-130, 194-195, and glycine 199; these read QTN, NRE, and DW. 2 disulfide bridges follow: cysteine 223-cysteine 234 and cysteine 271-cysteine 284. Arginine 276 contributes to the xyloglucan binding site.

This sequence belongs to the glycosyl hydrolase 16 family. XTH group 1 subfamily. Contains at least one intrachain disulfide bond essential for its enzymatic activity. Highly expressed in shoot apices. In the vegetative and reproductive phases, it accumulates in the shoot apex region, where cell division is most active. In the reproductive phase, it is also expressed in flower buds, flower stalks and internodes bearing flowers.

The protein localises to the secreted. Its subcellular location is the cell wall. It is found in the extracellular space. The protein resides in the apoplast. It carries out the reaction breaks a beta-(1-&gt;4) bond in the backbone of a xyloglucan and transfers the xyloglucanyl segment on to O-4 of the non-reducing terminal glucose residue of an acceptor, which can be a xyloglucan or an oligosaccharide of xyloglucan.. Its function is as follows. Catalyzes xyloglucan endohydrolysis (XEH) and/or endotransglycosylation (XET). Cleaves and religates xyloglucan polymers, an essential constituent of the primary cell wall, and thereby participates in cell wall construction of growing tissues. Involved in internodal cell elongation. This Arabidopsis thaliana (Mouse-ear cress) protein is Xyloglucan endotransglucosylase/hydrolase protein 9 (XTH9).